Here is a 284-residue protein sequence, read N- to C-terminus: Bifunctional protein FolD (284 aa).

NADP(+) is bound by residues 166 to 168 and isoleucine 232; that span reads GAS.

Belongs to the tetrahydrofolate dehydrogenase/cyclohydrolase family. In terms of assembly, homodimer.

It catalyses the reaction (6R)-5,10-methylene-5,6,7,8-tetrahydrofolate + NADP(+) = (6R)-5,10-methenyltetrahydrofolate + NADPH. The catalysed reaction is (6R)-5,10-methenyltetrahydrofolate + H2O = (6R)-10-formyltetrahydrofolate + H(+). The protein operates within one-carbon metabolism; tetrahydrofolate interconversion. Catalyzes the oxidation of 5,10-methylenetetrahydrofolate to 5,10-methenyltetrahydrofolate and then the hydrolysis of 5,10-methenyltetrahydrofolate to 10-formyltetrahydrofolate. The chain is Bifunctional protein FolD from Glaesserella parasuis serovar 5 (strain SH0165) (Haemophilus parasuis).